A 500-amino-acid polypeptide reads, in one-letter code: Lysine--tRNA ligase (500 aa).

Mg(2+) contacts are provided by Glu-407 and Glu-414.

It belongs to the class-II aminoacyl-tRNA synthetase family. Homodimer. Requires Mg(2+) as cofactor.

Its subcellular location is the cytoplasm. It catalyses the reaction tRNA(Lys) + L-lysine + ATP = L-lysyl-tRNA(Lys) + AMP + diphosphate. This chain is Lysine--tRNA ligase, found in Azobacteroides pseudotrichonymphae genomovar. CFP2.